A 227-amino-acid chain; its full sequence is Phosphoribosylformylglycinamidine synthase subunit PurQ (227 aa).

Residues 3 to 225 (FAVIVLPGSN…VKNWRETHVT (223 aa)) enclose the Glutamine amidotransferase type-1 domain. Cys86 functions as the Nucleophile in the catalytic mechanism. Catalysis depends on residues His194 and Glu196.

In terms of assembly, part of the FGAM synthase complex composed of 1 PurL, 1 PurQ and 2 PurS subunits.

Its subcellular location is the cytoplasm. It carries out the reaction N(2)-formyl-N(1)-(5-phospho-beta-D-ribosyl)glycinamide + L-glutamine + ATP + H2O = 2-formamido-N(1)-(5-O-phospho-beta-D-ribosyl)acetamidine + L-glutamate + ADP + phosphate + H(+). The catalysed reaction is L-glutamine + H2O = L-glutamate + NH4(+). Its pathway is purine metabolism; IMP biosynthesis via de novo pathway; 5-amino-1-(5-phospho-D-ribosyl)imidazole from N(2)-formyl-N(1)-(5-phospho-D-ribosyl)glycinamide: step 1/2. Part of the phosphoribosylformylglycinamidine synthase complex involved in the purines biosynthetic pathway. Catalyzes the ATP-dependent conversion of formylglycinamide ribonucleotide (FGAR) and glutamine to yield formylglycinamidine ribonucleotide (FGAM) and glutamate. The FGAM synthase complex is composed of three subunits. PurQ produces an ammonia molecule by converting glutamine to glutamate. PurL transfers the ammonia molecule to FGAR to form FGAM in an ATP-dependent manner. PurS interacts with PurQ and PurL and is thought to assist in the transfer of the ammonia molecule from PurQ to PurL. This chain is Phosphoribosylformylglycinamidine synthase subunit PurQ, found in Bacillus subtilis (strain 168).